A 132-amino-acid chain; its full sequence is MAKLNQVTLSKIGKNGDQTLTLTPRGVNPTNGVASLSEAGAVPALEKRVTVSVAQPSRNRKNFKVQIKLQNPTACTRDACDPSVTRSAFADVTLSFTSYSTDEERALIRTELAALLADPLIVDAIDNLNPAY.

The protein belongs to the Leviviricetes capsid protein family. Homodimer. The capsid protein dimer binds to the viral RNA via an operator hairpin, but also many other RNA sequences in the viral genome.

Its subcellular location is the virion. Capsid protein self-assembles to form an icosahedral capsid with a T=3 symmetry, about 26 nm in diameter, and consisting of 89 capsid proteins dimers (178 capsid proteins). Involved in viral genome encapsidation through the interaction between a capsid protein dimer and the multiple packaging signals present in the RNA genome. Binding of the capsid proteins to the viral RNA induces a conformational change required for efficient T=3 shell formation. The capsid also contains 1 copy of the A2 maturation protein. In terms of biological role, acts as a translational repressor of viral replicase synthesis late in infection. This latter function is the result of capsid protein interaction with an RNA hairpin which contains the replicase ribosome-binding site. The protein is Capsid protein of Enterobacteria phage SP (Bacteriophage SP).